Here is a 430-residue protein sequence, read N- to C-terminus: POU domain, class 2, transcription factor 3 (430 aa).

4 disordered regions span residues 1 to 40 (MVNLEPMHTEIKMSGDVADSTDARSTFGQVESGNDRNGLD), 60 to 81 (HRPCHLSQGPTMMPGNQMSGDM), 129 to 180 (LLLP…EPTD), and 248 to 267 (DAESSPSDPSASTPSSYPTL). Polar residues-rich tracts occupy residues 23–32 (ARSTFGQVES) and 67–78 (QGPTMMPGNQMS). Low complexity predominate over residues 129-139 (LLLPQTGPGLT). The POU-specific domain occupies 176 to 250 (DEPTDLEELE…LLEKWLNDAE (75 aa)). The segment covering 251 to 267 (SSPSDPSASTPSSYPTL) has biased composition (low complexity). Positions 274-333 (KRKKRTSIETNIRLTLEKRFQDNPKPSSEEISMIAEQLSMEKEVVRVWFCNRRQKEKRIN) form a DNA-binding region, homeobox. 2 stretches are compositionally biased toward low complexity: residues 355–364 (SLGSLSVPPV) and 374–390 (SSCSPGNNSRPSSPGSG). A disordered region spans residues 355 to 413 (SLGSLSVPPVHSTMPGTVTSSCSPGNNSRPSSPGSGLHASSPTASQNNSKAAMNPSSAA). Residues 392–413 (HASSPTASQNNSKAAMNPSSAA) are compositionally biased toward polar residues.

Belongs to the POU transcription factor family. Class-2 subfamily. Interacts (via the POU domain) with POU2AF1 and POU2AF2 in a DNA-dependent manner; this interaction recruits POU2AF2 to chromatin and increases POU2F3 transactivation activity. As to expression, expressed in epidermis and hair follicles.

The protein resides in the nucleus. Its function is as follows. Transcription factor that binds to the octamer motif (5'-ATTTGCAT-3') and regulates cell type-specific differentiation pathways. Involved in the regulation of keratinocytes differentiation. The POU2F3-POU2AF2/POU2AF3 complex drives the expression of tuft-cell-specific genes, a rare chemosensory cells that coordinate immune and neural functions within mucosal epithelial tissues. Inhibits transactivation by POU2F1. This chain is POU domain, class 2, transcription factor 3 (Pou2f3), found in Rattus norvegicus (Rat).